A 369-amino-acid polypeptide reads, in one-letter code: Holliday junction branch migration complex subunit RuvB (369 aa).

A disordered region spans residues M1–R21. The segment at M1–Y184 is large ATPase domain (RuvB-L). ATP is bound by residues L23, R24, G65, K68, T69, T70, E131–Y133, R174, Y184, and R221. Residue T69 participates in Mg(2+) binding. Residues T185–E255 are small ATPAse domain (RuvB-S). Residues H258 to D369 form a head domain (RuvB-H) region. Residues R294, R313, and R318 each coordinate DNA.

Belongs to the RuvB family. Homohexamer. Forms an RuvA(8)-RuvB(12)-Holliday junction (HJ) complex. HJ DNA is sandwiched between 2 RuvA tetramers; dsDNA enters through RuvA and exits via RuvB. An RuvB hexamer assembles on each DNA strand where it exits the tetramer. Each RuvB hexamer is contacted by two RuvA subunits (via domain III) on 2 adjacent RuvB subunits; this complex drives branch migration. In the full resolvosome a probable DNA-RuvA(4)-RuvB(12)-RuvC(2) complex forms which resolves the HJ.

Its subcellular location is the cytoplasm. The enzyme catalyses ATP + H2O = ADP + phosphate + H(+). Functionally, the RuvA-RuvB-RuvC complex processes Holliday junction (HJ) DNA during genetic recombination and DNA repair, while the RuvA-RuvB complex plays an important role in the rescue of blocked DNA replication forks via replication fork reversal (RFR). RuvA specifically binds to HJ cruciform DNA, conferring on it an open structure. The RuvB hexamer acts as an ATP-dependent pump, pulling dsDNA into and through the RuvAB complex. RuvB forms 2 homohexamers on either side of HJ DNA bound by 1 or 2 RuvA tetramers; 4 subunits per hexamer contact DNA at a time. Coordinated motions by a converter formed by DNA-disengaged RuvB subunits stimulates ATP hydrolysis and nucleotide exchange. Immobilization of the converter enables RuvB to convert the ATP-contained energy into a lever motion, pulling 2 nucleotides of DNA out of the RuvA tetramer per ATP hydrolyzed, thus driving DNA branch migration. The RuvB motors rotate together with the DNA substrate, which together with the progressing nucleotide cycle form the mechanistic basis for DNA recombination by continuous HJ branch migration. Branch migration allows RuvC to scan DNA until it finds its consensus sequence, where it cleaves and resolves cruciform DNA. This chain is Holliday junction branch migration complex subunit RuvB, found in Bartonella bacilliformis (strain ATCC 35685 / KC583 / Herrer 020/F12,63).